The primary structure comprises 661 residues: Ubiquitin carboxyl-terminal hydrolase 51 (661 aa).

The disordered stretch occupies residues 1-144 (MRGTQGAQEM…SENSLLEVGS (144 aa)). Polar residues predominate over residues 21 to 30 (TSENLTSRGS). Basic residues predominate over residues 53–71 (PRRKPRPRPQPRSRSRGGR). Pro residues predominate over residues 75 to 96 (APPPPPAKPPPPPPAPPPPPLP). The segment at 149–267 (TGCCHVESFK…KETKEKILGL (119 aa)) adopts a UBP-type zinc-finger fold. Zn(2+) contacts are provided by Cys151, His153, Cys192, Cys195, Cys205, Cys208, Cys213, His218, His222, His228, Cys241, and Cys244. Residues 320–656 (RGLINLGNTC…EGYLLFYHRQ (337 aa)) enclose the USP domain. Catalysis depends on Cys329, which acts as the Nucleophile. The Proton acceptor role is filled by His615.

Belongs to the peptidase C19 family. As to quaternary structure, interacts with H2A.

The protein localises to the chromosome. The catalysed reaction is Thiol-dependent hydrolysis of ester, thioester, amide, peptide and isopeptide bonds formed by the C-terminal Gly of ubiquitin (a 76-residue protein attached to proteins as an intracellular targeting signal).. In terms of biological role, specifically deubiquitinates 'Lys-14' (H2AK13Ub) and 'Lys-16'(H2AK15Ub) of histone H2A regulating the DNA damage response at double-strand breaks (DSBs). USP51 is recruited to chromatin after DNA damage and regulates the dynamic assembly/disassembly of TP53BP1 and BRCA1. Functions in DNA double-strand break repair also by mediating the deubiquitination and subsequent stabilization of DGCR8, leading to the recruitment of DGCR8 binding partners to double strand breaks such as RNF168 or MDC1. In addition, promotes the deubiquitination and stabilization of the transcriptional repressor ZEB1. The chain is Ubiquitin carboxyl-terminal hydrolase 51 from Mus musculus (Mouse).